We begin with the raw amino-acid sequence, 212 residues long: Thylakoid membrane protein slr1949 (212 aa).

A helical membrane pass occupies residues 109–131 (WVQDGLLLLLALGLCGISGYRLW). The stretch at 180-212 (PNRRQRKQYETRLQALRQSAAKMKAKTQKAKAL) forms a coiled coil.

The protein resides in the cellular thylakoid membrane. The polypeptide is Thylakoid membrane protein slr1949 (Synechocystis sp. (strain ATCC 27184 / PCC 6803 / Kazusa)).